Here is a 98-residue protein sequence, read N- to C-terminus: Protein translation factor SUI1 homolog (98 aa).

It belongs to the SUI1 family.

In Thermococcus kodakarensis (strain ATCC BAA-918 / JCM 12380 / KOD1) (Pyrococcus kodakaraensis (strain KOD1)), this protein is Protein translation factor SUI1 homolog.